Here is a 1374-residue protein sequence, read N- to C-terminus: DNA-directed RNA polymerase subunit beta' (1374 aa).

Residues Cys-71, Cys-73, Cys-86, and Cys-89 each contribute to the Zn(2+) site. Mg(2+) is bound by residues Asp-462, Asp-464, and Asp-466. Zn(2+)-binding residues include Cys-810, Cys-884, Cys-891, and Cys-894.

The protein belongs to the RNA polymerase beta' chain family. As to quaternary structure, the RNAP catalytic core consists of 2 alpha, 1 beta, 1 beta' and 1 omega subunit. When a sigma factor is associated with the core the holoenzyme is formed, which can initiate transcription. It depends on Mg(2+) as a cofactor. The cofactor is Zn(2+).

The catalysed reaction is RNA(n) + a ribonucleoside 5'-triphosphate = RNA(n+1) + diphosphate. Its function is as follows. DNA-dependent RNA polymerase catalyzes the transcription of DNA into RNA using the four ribonucleoside triphosphates as substrates. The sequence is that of DNA-directed RNA polymerase subunit beta' from Rickettsia massiliae (strain Mtu5).